A 398-amino-acid chain; its full sequence is Phosphoglycerate kinase (398 aa).

Substrate is bound by residues 21–23 (DFN), arginine 36, 59–62 (HLGR), arginine 119, and arginine 157. Residues lysine 208, glycine 296, glutamate 327, and 354–357 (GGDS) contribute to the ATP site.

This sequence belongs to the phosphoglycerate kinase family. In terms of assembly, monomer.

It localises to the cytoplasm. It carries out the reaction (2R)-3-phosphoglycerate + ATP = (2R)-3-phospho-glyceroyl phosphate + ADP. It participates in carbohydrate degradation; glycolysis; pyruvate from D-glyceraldehyde 3-phosphate: step 2/5. The sequence is that of Phosphoglycerate kinase from Streptococcus mutans serotype c (strain ATCC 700610 / UA159).